The chain runs to 1020 residues: Non-canonical nonribosomal peptide synthetase hkm10 (1020 aa).

The adenylation (A) domain stretch occupies residues 21–419 (QMLEDPDAIA…GRFDHQVKIR (399 aa)). In terms of domain architecture, Carrier spans 526–608 (QDKVPSEGAS…QLAHIVDRNQ (83 aa)). The residue at position 568 (Ser568) is an O-(pantetheine 4'-phosphoryl)serine. A short-chain dehydrogenase/reductase (R) domain region spans residues 652 to 894 (LTGATGFVGA…FVPIDYVTST (243 aa)).

It belongs to the NRP synthetase family.

It functions in the pathway secondary metabolite biosynthesis. In terms of biological role, non-canonical nonribosomal peptide synthetase; part of the gene cluster that mediates the biosynthesis of hancockiamides, an unusual new family of N-cinnamoylated piperazines. The NRPS hkm10 and the NmrA-like reductase hkm9 are proposed to convert two molecules of L-Phe to the intermediary piperazine called xenocockiamide A. Xenocockiamide A is then converted to hancockiamide D via a series of hydroxylations and O-methylations. The tyrosinase hkm6 may catalyze an aromatic hydroxylation, then the 2-oxoglutarate-dependent Fe(II) dioxygenase hkm4 and the FAD-dependent phenol hydroxylase hkm7 may catalyze consecutive hydroxylations to install 2 more hydroxy groups, and the methyltransferase hkm8 probably catalyzes two methylations using 2 molecules of S-adenosyl-L-methionine (SAM). The NRPS hkm11 activates and transfers trans-cinnamate supplied by the PAL hkm12 to hancockiamide D and produces hancockiamide A. NRPS Hkm11 has the flexibility to tolerate the bulky hancockiamide G as a substrate and the absence of the acetyl-transferase hkm3 opens up the opportunity for hkm11 to introduce a second N-cinnamoyl moiety. The cytochrome P450 monooxygenase hkm5 catalyzes the methylenedioxy bridge formation, converting hancockiamide A into hancockiamide G. Hkm5 can also convert hancockiamide B into hancockiamide C, and hancockiamide D into hancockiamide H. The N-acetyltransferase hkm3 finally transfers an acetyl group to 1-N of piperazine, converting hancockiamide A into hancockiamide B and hancockiamide G into hancockiamide C. The sequence is that of Non-canonical nonribosomal peptide synthetase hkm10 from Aspergillus hancockii.